We begin with the raw amino-acid sequence, 120 residues long: Small ribosomal subunit protein bS6 (120 aa).

A compositionally biased stretch (polar residues) spans 97 to 112 (SNEPSPILKNQSTENT). Positions 97 to 120 (SNEPSPILKNQSTENTPVIDVTAN) are disordered.

This sequence belongs to the bacterial ribosomal protein bS6 family.

Binds together with bS18 to 16S ribosomal RNA. The protein is Small ribosomal subunit protein bS6 of Rickettsia bellii (strain OSU 85-389).